Reading from the N-terminus, the 647-residue chain is Chaperone protein DnaK (647 aa).

Thr-198 carries the phosphothreonine; by autocatalysis modification. Basic and acidic residues-rich tracts occupy residues 514-529 (AEANKEEDKKKRESVD), 540-557 (STEKNLKEHGAKVSDADK), and 600-622 (SQEKKEGSPKEGDKNDEGKKDDN). Disordered stretches follow at residues 514–557 (AEAN…DADK) and 596–647 (AIYK…EKSA). Acidic residues predominate over residues 623 to 632 (VVDADFEEVK). The span at 633–647 (EESKEGKEEDKEKSA) shows a compositional bias: basic and acidic residues.

Belongs to the heat shock protein 70 family.

Acts as a chaperone. This Pelagibacter ubique (strain HTCC1062) protein is Chaperone protein DnaK.